A 345-amino-acid chain; its full sequence is tRNA-specific 2-thiouridylase MnmA (345 aa).

ATP-binding positions include 6-13 (LMSGGVDS) and Leu32. Catalysis depends on Cys92, which acts as the Nucleophile. A disulfide bond links Cys92 and Cys191. Gly116 is a binding site for ATP. The interval 138–140 (KDQ) is interaction with tRNA. Cys191 functions as the Cysteine persulfide intermediate in the catalytic mechanism. The interval 293–294 (RY) is interaction with tRNA.

It belongs to the MnmA/TRMU family.

It localises to the cytoplasm. The catalysed reaction is S-sulfanyl-L-cysteinyl-[protein] + uridine(34) in tRNA + AH2 + ATP = 2-thiouridine(34) in tRNA + L-cysteinyl-[protein] + A + AMP + diphosphate + H(+). Its function is as follows. Catalyzes the 2-thiolation of uridine at the wobble position (U34) of tRNA, leading to the formation of s(2)U34. This is tRNA-specific 2-thiouridylase MnmA from Helicobacter hepaticus (strain ATCC 51449 / 3B1).